Reading from the N-terminus, the 395-residue chain is Elongation factor Tu (395 aa).

One can recognise a tr-type G domain in the interval 10 to 205 (KVHMNVGTIG…TMDEYFKDPV (196 aa)). A G1 region spans residues 19-26 (GHVDHGKT). 19 to 26 (GHVDHGKT) contacts GTP. Threonine 26 serves as a coordination point for Mg(2+). A G2 region spans residues 60–64 (GITIN). A G3 region spans residues 81–84 (DCPG). GTP-binding positions include 81–85 (DCPGH) and 136–139 (NKVD). Positions 136 to 139 (NKVD) are G4. Residues 173–175 (SAF) form a G5 region.

Belongs to the TRAFAC class translation factor GTPase superfamily. Classic translation factor GTPase family. EF-Tu/EF-1A subfamily. As to quaternary structure, monomer.

The protein localises to the cytoplasm. It catalyses the reaction GTP + H2O = GDP + phosphate + H(+). Its function is as follows. GTP hydrolase that promotes the GTP-dependent binding of aminoacyl-tRNA to the A-site of ribosomes during protein biosynthesis. The protein is Elongation factor Tu of Treponema denticola (strain ATCC 35405 / DSM 14222 / CIP 103919 / JCM 8153 / KCTC 15104).